The primary structure comprises 227 residues: Neuromodulin (227 aa).

A disordered region spans residues 1 to 227 (MLCCMRRTKQ…EDPEADQEHA (227 aa)). S-palmitoyl cysteine attachment occurs at residues cysteine 3 and cysteine 4. Over residues 9–32 (KQVEKNDEDQKIEQDGVKPEDKAH) the composition is skewed to basic and acidic residues. One can recognise an IQ domain in the interval 31-60 (AHKAATKIQASFRGHITRKKLKGEKKGDAP). The residue at position 41 (serine 41) is a Phosphoserine; by PHK. The span at 54-84 (EKKGDAPAAEAEAKEKDDAPVADGVEKKEGD) shows a compositional bias: basic and acidic residues. The segment covering 85-97 (GSATTDAAPATSP) has biased composition (low complexity). Phosphoserine is present on residues serine 86 and serine 96. Over residues 98 to 127 (KAEEPSKAGDAPSEEKKGEGDAAPSEEKAG) the composition is skewed to basic and acidic residues. A compositionally biased stretch (low complexity) spans 128–139 (SAETESAAKATT). Threonine 138 bears the Phosphothreonine mark. Serine 142, serine 144, and serine 145 each carry phosphoserine. A compositionally biased stretch (basic and acidic residues) spans 146 to 158 (KAEDGPAKEEPKQ). The span at 159-193 (ADVPAAVTDAAATTPAAEDAATKAAQPPTETAESS) shows a compositional bias: low complexity. Position 172 is a phosphothreonine (threonine 172). Serine 192 and serine 193 each carry phosphoserine; by CK2. The segment covering 202-215 (VDEAKPKESARQDE) has biased composition (basic and acidic residues). Residues 216-227 (GKEDPEADQEHA) show a composition bias toward acidic residues.

This sequence belongs to the neuromodulin family. As to quaternary structure, identified in a complex containing FGFR4, NCAM1, CDH2, PLCG1, FRS2, SRC, SHC1, GAP43 and CTTN. Interacts (via IQ domain) with calmodulin. Binds calmodulin with a greater affinity in the absence of Ca(2+) than in its presence. Post-translationally, phosphorylated. Phosphorylation of this protein by a protein kinase C is specifically correlated with certain forms of synaptic plasticity. Palmitoylated by ZDHHC3. Palmitoylation is regulated by ARF6 and is essential for plasma membrane association and axonal and dendritic filopodia induction. Deacylated by LYPLA2. In terms of tissue distribution, expressed in the hippocampus (at protein level). Expressed in the dorsal root ganglion and the spinal cord (at protein level).

It localises to the cell membrane. The protein localises to the cell projection. Its subcellular location is the growth cone membrane. It is found in the synapse. The protein resides in the filopodium membrane. It localises to the perikaryon. The protein localises to the dendrite. Its subcellular location is the axon. It is found in the cytoplasm. In terms of biological role, this protein is associated with nerve growth. It is a major component of the motile 'growth cones' that form the tips of elongating axons. Plays a role in axonal and dendritic filopodia induction. The polypeptide is Neuromodulin (Gap43) (Mus musculus (Mouse)).